The sequence spans 190 residues: Crossover junction endodeoxyribonuclease RuvC (190 aa).

Catalysis depends on residues D8, E67, and D139. Residues D8, E67, and D139 each contribute to the Mg(2+) site.

Belongs to the RuvC family. Homodimer which binds Holliday junction (HJ) DNA. The HJ becomes 2-fold symmetrical on binding to RuvC with unstacked arms; it has a different conformation from HJ DNA in complex with RuvA. In the full resolvosome a probable DNA-RuvA(4)-RuvB(12)-RuvC(2) complex forms which resolves the HJ. The cofactor is Mg(2+).

The protein localises to the cytoplasm. The catalysed reaction is Endonucleolytic cleavage at a junction such as a reciprocal single-stranded crossover between two homologous DNA duplexes (Holliday junction).. In terms of biological role, the RuvA-RuvB-RuvC complex processes Holliday junction (HJ) DNA during genetic recombination and DNA repair. Endonuclease that resolves HJ intermediates. Cleaves cruciform DNA by making single-stranded nicks across the HJ at symmetrical positions within the homologous arms, yielding a 5'-phosphate and a 3'-hydroxyl group; requires a central core of homology in the junction. The consensus cleavage sequence is 5'-(A/T)TT(C/G)-3'. Cleavage occurs on the 3'-side of the TT dinucleotide at the point of strand exchange. HJ branch migration catalyzed by RuvA-RuvB allows RuvC to scan DNA until it finds its consensus sequence, where it cleaves and resolves the cruciform DNA. The protein is Crossover junction endodeoxyribonuclease RuvC of Actinobacillus succinogenes (strain ATCC 55618 / DSM 22257 / CCUG 43843 / 130Z).